The primary structure comprises 266 residues: Mediator of RNA polymerase II transcription subunit 18 (266 aa).

It belongs to the Mediator complex subunit 18 family. Component of the Mediator complex.

Its subcellular location is the nucleus. Functionally, component of the Mediator complex, a coactivator involved in the regulated transcription of nearly all RNA polymerase II-dependent genes. Mediator functions as a bridge to convey information from gene-specific regulatory proteins to the basal RNA polymerase II transcription machinery. Mediator is recruited to promoters by direct interactions with regulatory proteins and serves as a scaffold for the assembly of a functional preinitiation complex with RNA polymerase II and the general transcription factors. This chain is Mediator of RNA polymerase II transcription subunit 18 (SRB5), found in Candida glabrata (strain ATCC 2001 / BCRC 20586 / JCM 3761 / NBRC 0622 / NRRL Y-65 / CBS 138) (Yeast).